Here is a 500-residue protein sequence, read N- to C-terminus: MNYFPWLTIIVVFPIFAGSLIFFLPHKGNRVIRWYTICICILELLLTTYAFCYHFQSDDPLIQLVEDYKWIDFFDFHWRLGIDGLSIGPILLTGFITTLATLAAWPVTRDSRLFHFLMLAMYSGQIGLFSSRDLLLFFIMWELELIPVYLLLAMWGGKKRLYSATKFILYTAGGSVFLLMGVLGVALYGSNEPTLNFETSVNQSYPVVLEIIFYIGFFIAFAVKSPIIPLHTWLPDTHGEAHYSTCMLLAGILLKMGAYGLIRINMELLPHAHSIFSPWLMIIGTIQIIYAASTSLGQRNLKKRIAYSSVSHMGFIIIGISSLTDTGLNGALLQIISHGFIGAALFFLAGTTYDRIRLVYLDEMGGIAIPMPKMFTMFSSFSMASLALPGMSGFVAELIVFFGIITGQKYLLMPKLLITFVMAIGIILTPIYSLSMPRQMFYGYKLFNAPKDSFFDSGPRELFLSISIFLPVIGIGIYPDFVLSLAVDKVEVILSNFFYR.

14 consecutive transmembrane segments (helical) span residues 4-24 (FPWL…IFFL), 35-55 (YTIC…CYHF), 87-107 (IGPI…AWPV), 113-130 (LFHF…GLFS), 134-154 (LLLF…LLAM), 167-187 (FILY…GVAL), 208-228 (VLEI…SPII), 242-262 (HYST…YGLI), 272-292 (AHSI…IYAA), 305-325 (IAYS…SLTD), 330-350 (GALL…FLAG), 386-406 (LALP…GIIT), 416-436 (LLIT…SLSM), and 462-482 (LFLS…PDFV).

The protein belongs to the complex I subunit 4 family.

The protein resides in the plastid. The protein localises to the chloroplast thylakoid membrane. The catalysed reaction is a plastoquinone + NADH + (n+1) H(+)(in) = a plastoquinol + NAD(+) + n H(+)(out). It catalyses the reaction a plastoquinone + NADPH + (n+1) H(+)(in) = a plastoquinol + NADP(+) + n H(+)(out). This is NAD(P)H-quinone oxidoreductase chain 4, chloroplastic from Solanum lycopersicum (Tomato).